We begin with the raw amino-acid sequence, 453 residues long: Bifunctional protein GlmU (453 aa).

Residues 1–227 (MNKLSVVILA…LMEVEGVNNR (227 aa)) are pyrophosphorylase. UDP-N-acetyl-alpha-D-glucosamine contacts are provided by residues 9–12 (LAAG), Lys23, Gln74, 79–80 (GT), 101–103 (YGD), Gly138, Glu152, Asn167, and Asn225. Asp103 contacts Mg(2+). Asn225 is a binding site for Mg(2+). The segment at 228-248 (LQLANLERHFQRKQVEKLLLA) is linker. An N-acetyltransferase region spans residues 249–453 (GVTFADPARF…ISNWQRPKRK (205 aa)). Positions 331 and 349 each coordinate UDP-N-acetyl-alpha-D-glucosamine. The active-site Proton acceptor is the His361. UDP-N-acetyl-alpha-D-glucosamine-binding residues include Tyr364 and Asn375. Residues Ala378, 384–385 (NY), Ser403, Ala421, and Arg438 contribute to the acetyl-CoA site.

It in the N-terminal section; belongs to the N-acetylglucosamine-1-phosphate uridyltransferase family. This sequence in the C-terminal section; belongs to the transferase hexapeptide repeat family. Homotrimer. The cofactor is Mg(2+).

It localises to the cytoplasm. The catalysed reaction is alpha-D-glucosamine 1-phosphate + acetyl-CoA = N-acetyl-alpha-D-glucosamine 1-phosphate + CoA + H(+). The enzyme catalyses N-acetyl-alpha-D-glucosamine 1-phosphate + UTP + H(+) = UDP-N-acetyl-alpha-D-glucosamine + diphosphate. It functions in the pathway nucleotide-sugar biosynthesis; UDP-N-acetyl-alpha-D-glucosamine biosynthesis; N-acetyl-alpha-D-glucosamine 1-phosphate from alpha-D-glucosamine 6-phosphate (route II): step 2/2. Its pathway is nucleotide-sugar biosynthesis; UDP-N-acetyl-alpha-D-glucosamine biosynthesis; UDP-N-acetyl-alpha-D-glucosamine from N-acetyl-alpha-D-glucosamine 1-phosphate: step 1/1. The protein operates within bacterial outer membrane biogenesis; LPS lipid A biosynthesis. Functionally, catalyzes the last two sequential reactions in the de novo biosynthetic pathway for UDP-N-acetylglucosamine (UDP-GlcNAc). The C-terminal domain catalyzes the transfer of acetyl group from acetyl coenzyme A to glucosamine-1-phosphate (GlcN-1-P) to produce N-acetylglucosamine-1-phosphate (GlcNAc-1-P), which is converted into UDP-GlcNAc by the transfer of uridine 5-monophosphate (from uridine 5-triphosphate), a reaction catalyzed by the N-terminal domain. This chain is Bifunctional protein GlmU, found in Histophilus somni (strain 129Pt) (Haemophilus somnus).